Consider the following 124-residue polypeptide: UPF0102 protein Mmc1_3298 (124 aa).

This sequence belongs to the UPF0102 family.

The chain is UPF0102 protein Mmc1_3298 from Magnetococcus marinus (strain ATCC BAA-1437 / JCM 17883 / MC-1).